Consider the following 289-residue polypeptide: Zinc finger matrin-type protein 3 (289 aa).

The segment at 1-59 (MILLQHAGLPPPKRPSSSPPMSVAARSTGALQLPPQKPFGQEASLPLAGEEEPPKGGEQ) is disordered. Pro residues predominate over residues 9–18 (LPPPKRPSSS). 2 consecutive Matrin-type zinc fingers follow at residues 70-100 (LYCKLCNVTLNSAQQAQAHYQGKNHGKKLRN) and 147-177 (DYCKLCDASFSSPAVAQAHYQGKNHAKRLRL). Residues 180 to 191 (AQSNSFSDSSEV) show a composition bias toward polar residues. A disordered region spans residues 180 to 200 (AQSNSFSDSSEVGQRRTRKEG). A Matrin-type 3 zinc finger spans residues 246–276 (FYCSMCNVGAGEEVEFRQHLESKQHKSKVSE).

In terms of assembly, interacts with dsRNA.

Its subcellular location is the nucleus. It localises to the nucleolus. In terms of biological role, acts as a bona fide target gene of p53/TP53. May play a role in the TP53-dependent growth regulatory pathway. May contribute to TP53-mediated apoptosis by regulation of TP53 expression and translocation to the nucleus and nucleolus. The polypeptide is Zinc finger matrin-type protein 3 (Bos taurus (Bovine)).